Reading from the N-terminus, the 456-residue chain is Putative F-box/LRR-repeat protein At3g18150 (456 aa).

The F-box domain maps to 30 to 78 (VDSISSLPDVILQHILSFIPTKLAITTSLLSKRWRHVWCDTPSLSFNDY). 6 LRR repeats span residues 177–202 (TCLLSDESMANILFGCPILESLTLDH), 203–213 (CGGLRVLDLSK), 228–253 (VPELTAMQIVAPHTHCLRLRNSKLPC), 278–303 (KADFLQVTLLKMLEKLHNVEKLTLGG), 333–358 (IFQYVIPGIERVLQNSPDLKKLTLLT), and 396–422 (CLDVESEHVVSFVELMLKNTKALDKMV).

The protein is Putative F-box/LRR-repeat protein At3g18150 of Arabidopsis thaliana (Mouse-ear cress).